We begin with the raw amino-acid sequence, 566 residues long: Arginine--tRNA ligase (566 aa).

The 'HIGH' region signature appears at 123 to 133 (PNVAKPFHVGH).

It belongs to the class-I aminoacyl-tRNA synthetase family. As to quaternary structure, monomer.

The protein resides in the cytoplasm. The catalysed reaction is tRNA(Arg) + L-arginine + ATP = L-arginyl-tRNA(Arg) + AMP + diphosphate. This Alkaliphilus metalliredigens (strain QYMF) protein is Arginine--tRNA ligase.